A 2036-amino-acid chain; its full sequence is Ral GTPase-activating protein subunit alpha-1 (2036 aa).

2 disordered regions span residues 343 to 384 (LVSR…SSLC) and 476 to 497 (EEGE…RNSS). A compositionally biased stretch (basic and acidic residues) spans 345-365 (SREESKNDNADKTDRTTEPEQ). Composition is skewed to polar residues over residues 366–384 (SHSN…SSLC) and 486–497 (GTNTADHVRNSS). A phosphoserine mark is found at S711 and S721. A disordered region spans residues 715–753 (SFSRGWSRDQPGQAPMRQRSATTTGSPGTEKARSIVRQK). T754 is modified (phosphothreonine). At S773 the chain carries Phosphoserine. T778 is modified (phosphothreonine). Residues S797, S860, S861, and S864 each carry the phosphoserine modification. Disordered regions lie at residues 849–910 (SGNA…SDSH) and 982–1009 (TITG…STLN). Residues 850-863 (GNASTMTRRGSSPG) are compositionally biased toward polar residues. Low complexity predominate over residues 895 to 910 (SPASAGSSDLISSDSH). The span at 983 to 1009 (ITGSESASPVHSPLGSRSQTPSPSTLN) shows a compositional bias: polar residues. Residues S986, S990, S994, and S1000 each carry the phosphoserine modification. T1002 is modified (phosphothreonine). S1004 and S1478 each carry phosphoserine. The interval 1327–2035 (FTNKTVAHVA…PYHHLPSDAD (709 aa)) is minimal domain that binds to TCF3/E12. Residues 1716–1744 (KQENDVINAILKQHTEEKEFVEKHFNDLN) adopt a coiled-coil conformation. Residues 1796–2004 (LRNLDSRQCR…EERARYLQTI (209 aa)) form the Rap-GAP domain.

Component of the heterodimeric RalGAP1 complex with RALGAPB. Heterodimerization is required for activity. Interacts with the HLH region of TCF3/isoform E12. In terms of tissue distribution, widely expressed.

Its subcellular location is the cytoplasm. The protein resides in the nucleus. Its function is as follows. Catalytic subunit of the heterodimeric RalGAP1 complex which acts as a GTPase activator for the Ras-like small GTPases RALA and RALB. In Homo sapiens (Human), this protein is Ral GTPase-activating protein subunit alpha-1 (RALGAPA1).